We begin with the raw amino-acid sequence, 600 residues long: Single-strand DNA endonuclease 1 (600 aa).

Positions 1 to 97 (MGVKYLWDVL…KRRLKARFEI (97 aa)) are N-domain. Residues 2–97 (GVKYLWDVLE…KRRLKARFEI (96 aa)) are XPG-N domain. 7 residues coordinate Mg(2+): aspartate 30, aspartate 76, glutamate 142, glutamate 144, aspartate 163, aspartate 165, and aspartate 215. The segment at 130–215 (STLGILCLDG…IALALLLGSD (86 aa)) is XPG-I domain. 2 I-domain regions span residues 130-218 (STLG…DYSQ) and 130-219 (STLG…YSQG). The segment at 215 to 353 (DYSQGVRGLR…ILPKVAERNL (139 aa)) is 5'-3' exonuclease domain. The disordered stretch occupies residues 433-458 (MAAKKKKPKPKQKQKETSSPTKSSSL). Residues 435–444 (AKKKKPKPKQ) are compositionally biased toward basic residues.

Belongs to the XPG/RAD2 endonuclease family. GEN subfamily. The cofactor is Mg(2+).

The protein localises to the nucleus. Endonuclease which cleaves flap structures at the junction between single-stranded DNA and double-stranded DNA with a specific cleavage site in the 5' overhang strand exactly one nucleotide 3' of the branch point. Structure- and sequence-specific nuclease that resolves holliday junctions (HJs) by symmetrically oriented incisions in two opposing strands near the junction point, thus leading to ligatable products; HJs are physical links between homologous DNA molecules that arise as central intermediary structures during homologous recombination and repair in meiotic and somatic cells. Structure-specific nuclease with 5'-flap endonuclease activity, preferentially cleaving static flaps 5' overhang strand exactly one nucleotide in the 3' direction of the branch point and, to lower extent, on the two neighboring positions. Also able to cleave double-stranded flap strand 1 one nucleotide in the 3' direction of the branch point. Together with MUS81, essential for the resolution of toxic replication structures to ensure genome stability, and to maintain telomere integrity and replication. This is Single-strand DNA endonuclease 1 from Arabidopsis thaliana (Mouse-ear cress).